A 187-amino-acid chain; its full sequence is Keratin-associated protein 5-8 (187 aa).

A run of 9 repeats spans residues 28-31 (CCVP), 34-37 (CCKP), 40-43 (CCVP), 109-112 (CCKP), 119-122 (CCKP), 138-141 (CCKP), 148-151 (CCKP), 167-170 (CCKP), and 177-180 (CCVP). Residues 28-180 (CCVPICCCKP…CCSQSSCCVP (153 aa)) form a 9 X 4 AA repeats of C-C-X-P region.

Belongs to the KRTAP type 5 family. Restricted to hair root, not detected in any other tissues. Expressed in cuticle layers of differentiating hair follicles.

Functionally, in the hair cortex, hair keratin intermediate filaments are embedded in an interfilamentous matrix, consisting of hair keratin-associated protein (KRTAP), which are essential for the formation of a rigid and resistant hair shaft through their extensive disulfide bond cross-linking with abundant cysteine residues of hair keratins. The matrix proteins include the high-sulfur and high-glycine-tyrosine keratins. This chain is Keratin-associated protein 5-8 (KRTAP5-8), found in Homo sapiens (Human).